A 323-amino-acid chain; its full sequence is Pathogenicity locus probable regulatory protein WtsA (323 aa).

Residues 41–251 form the Sigma-54 factor interaction domain; the sequence is VAPLEIDLVL…ELKTAAKRFT (211 aa). ATP is bound by residues 52–59 and 123–132; these read GETGTGKD and EIDSMPLSLQ. Residues 293–312 constitute a DNA-binding region (H-T-H motif); that stretch reads IDEAAMELGMPLRTLYHRIK.

Its function is as follows. Positive activator of wtsB involved in plant pathogenicity. Probably interacts with sigma-54. The protein is Pathogenicity locus probable regulatory protein WtsA (wtsA) of Pantoea stewartii subsp. stewartii (Erwinia stewartii).